Here is a 526-residue protein sequence, read N- to C-terminus: Adenylosuccinate synthetase (526 aa).

Residues Gly102–Lys108 and Gly130–Thr132 contribute to the GTP site. Residue Asp103 is the Proton acceptor of the active site. 2 residues coordinate Mg(2+): Asp103 and Gly130. Residues Asp103–Lys106, Asn128–His131, Thr219, Arg233, Asn310, Thr325, and Arg392 contribute to the IMP site. Catalysis depends on His131, which acts as the Proton donor. Thr388–Arg394 contacts substrate. Residues Arg394, Lys420–Asp422, and Gly502–Gly504 contribute to the GTP site.

This sequence belongs to the adenylosuccinate synthetase family. Homodimer. It depends on Mg(2+) as a cofactor.

The protein localises to the cytoplasm. It carries out the reaction IMP + L-aspartate + GTP = N(6)-(1,2-dicarboxyethyl)-AMP + GDP + phosphate + 2 H(+). Its pathway is purine metabolism; AMP biosynthesis via de novo pathway; AMP from IMP: step 1/2. Plays an important role in the de novo pathway and in the salvage pathway of purine nucleotide biosynthesis. Catalyzes the first committed step in the biosynthesis of AMP from IMP. This Phaeodactylum tricornutum (strain CCAP 1055/1) protein is Adenylosuccinate synthetase.